Here is a 529-residue protein sequence, read N- to C-terminus: Peptide chain release factor 3 (529 aa).

Residues 11–280 enclose the tr-type G domain; that stretch reads NKRRTFAIIS…GLTKWAPTPL (270 aa). GTP is bound by residues 20–27, 88–92, and 142–145; these read SHPDAGKT, DTPGH, and NKCD.

Belongs to the TRAFAC class translation factor GTPase superfamily. Classic translation factor GTPase family. PrfC subfamily.

The protein localises to the cytoplasm. Increases the formation of ribosomal termination complexes and stimulates activities of RF-1 and RF-2. It binds guanine nucleotides and has strong preference for UGA stop codons. It may interact directly with the ribosome. The stimulation of RF-1 and RF-2 is significantly reduced by GTP and GDP, but not by GMP. This is Peptide chain release factor 3 from Pseudoalteromonas translucida (strain TAC 125).